Reading from the N-terminus, the 81-residue chain is Photosystem I iron-sulfur center (81 aa).

4Fe-4S ferredoxin-type domains follow at residues 2 to 31 (AHSVKIYATCIGCTQCVRACPTDVLEMVPW) and 39 to 68 (IASAPRTEDCVGCKRCESACPTDFLSVRVY). [4Fe-4S] cluster-binding residues include Cys11, Cys14, Cys17, Cys21, Cys48, Cys51, Cys54, and Cys58.

As to quaternary structure, the eukaryotic PSI reaction center is composed of at least 11 subunits. Requires [4Fe-4S] cluster as cofactor.

Its subcellular location is the plastid. The protein localises to the chloroplast thylakoid membrane. The catalysed reaction is reduced [plastocyanin] + hnu + oxidized [2Fe-2S]-[ferredoxin] = oxidized [plastocyanin] + reduced [2Fe-2S]-[ferredoxin]. Apoprotein for the two 4Fe-4S centers FA and FB of photosystem I (PSI); essential for photochemical activity. FB is the terminal electron acceptor of PSI, donating electrons to ferredoxin. The C-terminus interacts with PsaA/B/D and helps assemble the protein into the PSI complex. Required for binding of PsaD and PsaE to PSI. PSI is a plastocyanin-ferredoxin oxidoreductase, converting photonic excitation into a charge separation, which transfers an electron from the donor P700 chlorophyll pair to the spectroscopically characterized acceptors A0, A1, FX, FA and FB in turn. The protein is Photosystem I iron-sulfur center of Mesostigma viride (Green alga).